A 299-amino-acid chain; its full sequence is Very long chain fatty acid elongase 5 (299 aa).

Position 1 is an N-acetylmethionine (Met-1). 7 consecutive transmembrane segments (helical) span residues Trp-26–Val-46, Ile-64–Val-84, Val-112–Leu-132, Ile-139–Met-158, Phe-168–Ser-187, Gly-205–Cys-225, and Phe-227–Thr-247.

This sequence belongs to the ELO family. ELOVL5 subfamily. In terms of assembly, interacts with TECR. As to expression, highly expressed in lung and brain.

The protein resides in the endoplasmic reticulum membrane. It localises to the cell projection. It is found in the dendrite. It catalyses the reaction a very-long-chain acyl-CoA + malonyl-CoA + H(+) = a very-long-chain 3-oxoacyl-CoA + CO2 + CoA. It carries out the reaction (6Z,9Z,12Z,15Z)-octadecatetraenoyl-CoA + malonyl-CoA + H(+) = (8Z,11Z,14Z,17Z)-3-oxoicosatetraenoyl-CoA + CO2 + CoA. The enzyme catalyses (6Z,9Z,12Z)-octadecatrienoyl-CoA + malonyl-CoA + H(+) = (8Z,11Z,14Z)-3-oxoeicosatrienoyl-CoA + CO2 + CoA. The catalysed reaction is (5Z,8Z,11Z,14Z,17Z)-eicosapentaenoyl-CoA + malonyl-CoA + H(+) = 3-oxo-(7Z,10Z,13Z,16Z,19Z)-docosapentaenoyl-CoA + CO2 + CoA. It catalyses the reaction (5Z,8Z,11Z,14Z)-eicosatetraenoyl-CoA + malonyl-CoA + H(+) = (7Z,10Z,13Z,16Z)-3-oxodocosatetraenoyl-CoA + CO2 + CoA. It carries out the reaction (9Z,12Z,15Z)-octadecatrienoyl-CoA + malonyl-CoA + H(+) = (11Z,14Z,17Z)-3-oxoeicosatrienoyl-CoA + CO2 + CoA. The enzyme catalyses (9Z)-hexadecenoyl-CoA + malonyl-CoA + H(+) = 3-oxo-(11Z)-octadecenoyl-CoA + CO2 + CoA. The catalysed reaction is (9Z)-octadecenoyl-CoA + malonyl-CoA + H(+) = 3-oxo-(11Z)-eicosenoyl-CoA + CO2 + CoA. It catalyses the reaction (11Z)-octadecenoyl-CoA + malonyl-CoA + H(+) = 3-oxo-(13Z)-eicosenoyl-CoA + CO2 + CoA. It carries out the reaction (9Z,12Z)-octadecadienoyl-CoA + malonyl-CoA + H(+) = (11Z,14Z)-3-oxoicosa-11,14-dienoyl-CoA + CO2 + CoA. The protein operates within lipid metabolism; polyunsaturated fatty acid biosynthesis. Its function is as follows. Catalyzes the first and rate-limiting reaction of the four reactions that constitute the long-chain fatty acids elongation cycle. This endoplasmic reticulum-bound enzymatic process allows the addition of 2 carbons to the chain of long- and very long-chain fatty acids (VLCFAs) per cycle. Condensing enzyme that acts specifically toward polyunsaturated acyl-CoA with the higher activity toward C18:3(n-6) acyl-CoA. May participate in the production of monounsaturated and of polyunsaturated VLCFAs of different chain lengths that are involved in multiple biological processes as precursors of membrane lipids and lipid mediators. In conditions where the essential linoleic and alpha linoleic fatty acids are lacking it is also involved in the synthesis of Mead acid from oleic acid. The chain is Very long chain fatty acid elongase 5 from Rattus norvegicus (Rat).